A 249-amino-acid polypeptide reads, in one-letter code: Proteasome activator complex subunit 1 (249 aa).

The segment at 60–101 is disordered; the sequence is PLDIPVPDPVKEKEKGERKKQQEKEDKDEKKKGEDEDKGPPC. Positions 68 to 98 are enriched in basic and acidic residues; that stretch reads PVKEKEKGERKKQQEKEDKDEKKKGEDEDKG.

The protein belongs to the PA28 family. As to quaternary structure, heterodimer of PSME1 and PSME2, which forms a hexameric ring. PSME1 can form homoheptamers.

Implicated in immunoproteasome assembly and required for efficient antigen processing. The PA28 activator complex enhances the generation of class I binding peptides by altering the cleavage pattern of the proteasome. The sequence is that of Proteasome activator complex subunit 1 (PSME1) from Macaca fascicularis (Crab-eating macaque).